The sequence spans 190 residues: Shikimate kinase (190 aa).

13–18 is an ATP binding site; the sequence is GSGKTT. T17 serves as a coordination point for Mg(2+). Positions 35, 59, and 81 each coordinate substrate. R119 provides a ligand contact to ATP. R138 contacts substrate. Q155 is a binding site for ATP.

The protein belongs to the shikimate kinase family. As to quaternary structure, monomer. Mg(2+) is required as a cofactor.

The protein resides in the cytoplasm. It catalyses the reaction shikimate + ATP = 3-phosphoshikimate + ADP + H(+). It functions in the pathway metabolic intermediate biosynthesis; chorismate biosynthesis; chorismate from D-erythrose 4-phosphate and phosphoenolpyruvate: step 5/7. Catalyzes the specific phosphorylation of the 3-hydroxyl group of shikimic acid using ATP as a cosubstrate. The polypeptide is Shikimate kinase (Nitrosococcus oceani (strain ATCC 19707 / BCRC 17464 / JCM 30415 / NCIMB 11848 / C-107)).